The chain runs to 286 residues: Shikimate dehydrogenase (NADP(+)) (286 aa).

Shikimate is bound by residues 22 to 24 (SFS) and T69. The active-site Proton acceptor is K73. E85 serves as a coordination point for NADP(+). Shikimate-binding residues include N94 and D109. NADP(+)-binding positions include 133–137 (GAGGA), 157–162 (NRTIDK), and L231. Y233 serves as a coordination point for shikimate. G254 serves as a coordination point for NADP(+).

It belongs to the shikimate dehydrogenase family. Homodimer.

The enzyme catalyses shikimate + NADP(+) = 3-dehydroshikimate + NADPH + H(+). It functions in the pathway metabolic intermediate biosynthesis; chorismate biosynthesis; chorismate from D-erythrose 4-phosphate and phosphoenolpyruvate: step 4/7. In terms of biological role, involved in the biosynthesis of the chorismate, which leads to the biosynthesis of aromatic amino acids. Catalyzes the reversible NADPH linked reduction of 3-dehydroshikimate (DHSA) to yield shikimate (SA). This chain is Shikimate dehydrogenase (NADP(+)), found in Alkaliphilus oremlandii (strain OhILAs) (Clostridium oremlandii (strain OhILAs)).